The following is a 126-amino-acid chain: Holo-[acyl-carrier-protein] synthase (126 aa).

The Mg(2+) site is built by Asp9 and Glu58.

It belongs to the P-Pant transferase superfamily. AcpS family. It depends on Mg(2+) as a cofactor.

It localises to the cytoplasm. It catalyses the reaction apo-[ACP] + CoA = holo-[ACP] + adenosine 3',5'-bisphosphate + H(+). Functionally, transfers the 4'-phosphopantetheine moiety from coenzyme A to a Ser of acyl-carrier-protein. In Escherichia coli O17:K52:H18 (strain UMN026 / ExPEC), this protein is Holo-[acyl-carrier-protein] synthase.